The primary structure comprises 115 residues: MNLSLTLMTDVALALLLVMIAFWLPQLNIYTEKYSSYECGFDPMGSARLPFSMKFFLVAITFLLFDLEIALLLPLPWASQTTNLKLMLTMALLLISILAAGLAYEWSQKGLEWEE.

The next 3 helical transmembrane spans lie at 5-25 (LTLMTDVALALLLVMIAFWLP), 55-75 (FFLVAITFLLFDLEIALLLPL), and 86-106 (LMLTMALLLISILAAGLAYEW).

This sequence belongs to the complex I subunit 3 family. In terms of assembly, core subunit of respiratory chain NADH dehydrogenase (Complex I) which is composed of 45 different subunits. Interacts with TMEM186. Interacts with TMEM242.

Its subcellular location is the mitochondrion inner membrane. The catalysed reaction is a ubiquinone + NADH + 5 H(+)(in) = a ubiquinol + NAD(+) + 4 H(+)(out). In terms of biological role, core subunit of the mitochondrial membrane respiratory chain NADH dehydrogenase (Complex I) which catalyzes electron transfer from NADH through the respiratory chain, using ubiquinone as an electron acceptor. Essential for the catalytic activity of complex I. This is NADH-ubiquinone oxidoreductase chain 3 from Avahi cleesei (Cleese's woolly lemur).